Here is a 590-residue protein sequence, read N- to C-terminus: ATP-dependent lipid A-core flippase (590 aa).

Helical transmembrane passes span 31–51 (IFIA…VIPK), 74–94 (AILT…GYLL), 132–152 (AVIF…ITLV), 159–179 (VALL…VSVI), 259–279 (VTAF…MIQA), and 286–306 (IGGF…LKHL). The ABC transmembrane type-1 domain occupies 33-315 (IAAILAMAVV…LTDINQPLTR (283 aa)). Residues 347-585 (LVFERVGFRY…NGLYAGLHRI (239 aa)) enclose the ABC transporter domain. 381 to 388 (GPSGSGKT) is an ATP binding site.

This sequence belongs to the ABC transporter superfamily. Lipid exporter (TC 3.A.1.106) family. As to quaternary structure, homodimer.

It is found in the cell inner membrane. The catalysed reaction is ATP + H2O + lipid A-core oligosaccharideSide 1 = ADP + phosphate + lipid A-core oligosaccharideSide 2.. Involved in lipopolysaccharide (LPS) biosynthesis. Translocates lipid A-core from the inner to the outer leaflet of the inner membrane. Transmembrane domains (TMD) form a pore in the inner membrane and the ATP-binding domain (NBD) is responsible for energy generation. The polypeptide is ATP-dependent lipid A-core flippase (Cupriavidus pinatubonensis (strain JMP 134 / LMG 1197) (Cupriavidus necator (strain JMP 134))).